Consider the following 1439-residue polypeptide: Probable histone acetyltransferase HAC-like 2 (1439 aa).

2 disordered regions span residues 1–43 and 313–335; these read MKQG…ASAD and YGIS…TPTP. The segment covering 325–335 has biased composition (polar residues); it reads VNPSTRSTPTP. The segment at 607-687 adopts a TAZ-type zinc-finger fold; sequence ENTKQYHAQA…NEHCHVCCKA (81 aa). The PHD-type; degenerate zinc finger occupies 827 to 933; the sequence is KIHCHVQQET…EYTCFKCYIE (107 aa). A CBP/p300-type HAT domain is found at 948 to 1383; the sequence is VRGAKDLPRT…MLYHLHNPTG (436 aa). Residues 964 to 989 are a coiled coil; sequence EERLFKRLREERQERANKLKTSLDEV. Acetyl-CoA contacts are provided by residues 1071–1073, 1090–1091, and Trp-1146; these read LDS and RT. Residues 1265 to 1328 form a ZZ-type zinc finger; the sequence is HLQYSCSHCC…ILHPVEIVGV (64 aa). Zn(2+) contacts are provided by Cys-1270, Cys-1273, Cys-1285, Cys-1288, Cys-1294, Cys-1297, His-1310, and His-1318.

The protein localises to the nucleus. It catalyses the reaction L-lysyl-[protein] + acetyl-CoA = N(6)-acetyl-L-lysyl-[protein] + CoA + H(+). Acetyltransferase enzyme. Acetylates histones, giving a specific tag for transcriptional activation. The sequence is that of Probable histone acetyltransferase HAC-like 2 from Oryza sativa subsp. japonica (Rice).